The sequence spans 68 residues: MKPSSLTLAFLVVFMMAIMYNSVQAEALADADAEAFAEAGVKELFGKAWGLVKKHLPKACGLLGYVKQ.

An N-terminal signal peptide occupies residues 1-25 (MKPSSLTLAFLVVFMMAIMYNSVQA). Residues 26–39 (EALADADAEAFAEA) constitute a propeptide that is removed on maturation.

Belongs to the formicidae venom precursor-01 superfamily. Homo- or heterodimer with PLP7 (AC A0A348G6I9); disulfide-linked. Post-translationally, truncated sequences of this peptide have also been found in the venom. It is possible they have been cleaved in the venom. Expressed by the venom gland.

Its subcellular location is the secreted. This homodimer composed of two cationic amphipathic alpha-helical peptides has antimicrobial activities against E.coli (MIC=3.1 uM), S.aureus (MIC=3.1 uM), and S.cerevisiae (MIC=3.1 uM). It also shows histamine-releasing activity (66.4% at 10 uM) and a weak hemolytic activity (10.5% at 50 uM). The polypeptide is U-poneritoxin(01)-Om4a (Odontomachus monticola (Trap-jaw ant)).